Reading from the N-terminus, the 439-residue chain is MKPTVAIVGRPNVGKSTLFNRLIGERRAIVDDTPGITRDRIVGETEWRGITFNVIDTGGIEPYSEDIILKQMRRQAQFAIDMSDVIIFMVDGKTGLTDADREVANMLRVSKKPIVLAVNKIDNISEQPIIYEFYELGLSDPIPMSAEHGSGVGDVLDAVVSYFDKVGINEIEEDSIKVAIIGKPNTGKSSLVNYILGEERVIVSDIPGTTRDAIDSYVEFEGIPLTLIDTAGLRRKSKIYDNIERYSMLRTISAIERSDICVILLDGTEPVSEQDAKIAGYAYEAGKGCIIAVNKWDAVEKDEKTADEYKKQIEEKLSFLKFAPVLFISAKTGFRVKKLLETVLYVYGNYTRRITTGQINDVLAEATTIYQPPSDKGKQLKIYYMTQVGEKPPKMAIFVNDKDLFHFSYQRYIENYLRKTFDFTGVPIVFLIREKGEKD.

EngA-type G domains lie at 3 to 167 (PTVA…DKVG) and 176 to 351 (IKVA…GNYT). GTP is bound by residues 9–16 (GRPNVGKS), 56–60 (DTGGI), 119–122 (NKID), 182–189 (GKPNTGKS), 229–233 (DTAGL), and 294–297 (NKWD). The region spanning 352–436 (RRITTGQIND…PIVFLIREKG (85 aa)) is the KH-like domain.

This sequence belongs to the TRAFAC class TrmE-Era-EngA-EngB-Septin-like GTPase superfamily. EngA (Der) GTPase family. In terms of assembly, associates with the 50S ribosomal subunit.

Functionally, GTPase that plays an essential role in the late steps of ribosome biogenesis. This is GTPase Der from Caldicellulosiruptor saccharolyticus (strain ATCC 43494 / DSM 8903 / Tp8T 6331).